The following is a 570-amino-acid chain: Putative diflavin flavoprotein A 5 (570 aa).

The interval 38–231 (ERGTTSNSYV…LQVRLYAVGH (194 aa)) is zinc metallo-hydrolase. The Flavodoxin-like domain occupies 260-402 (VALLYASAYG…VGTDFAQTLK (143 aa)). Residues 421-570 (VGRIVGSVCV…INHRKTGNHY (150 aa)) form a flavodoxin-reductase-like region.

This sequence in the N-terminal section; belongs to the zinc metallo-hydrolase group 3 family. In the C-terminal section; belongs to the flavodoxin reductase family. It depends on Fe cation as a cofactor.

In terms of biological role, mediates electron transfer from NADH to oxygen, reducing it to water. This modular protein has 3 redox cofactors, in other organisms the same activity requires 2 or 3 proteins. The chain is Putative diflavin flavoprotein A 5 (dfa5) from Nostoc sp. (strain PCC 7120 / SAG 25.82 / UTEX 2576).